A 956-amino-acid polypeptide reads, in one-letter code: Run domain Beclin-1-interacting and cysteine-rich domain-containing protein (956 aa).

The RUN domain maps to 49–190 (WSKYGGLERL…PRLLAQIDAS (142 aa)). Positions 50-181 (SKYGGLERLC…CLEAVEQNNP (132 aa)) are interaction with PIK3C3. The residue at position 198 (Ser-198) is a Phosphoserine. Residues 205 to 437 (SQSLTALPGS…ITIIVEDPIA (233 aa)) form an interaction with YWHAB region. A compositionally biased stretch (low complexity) spans 233-242 (SLQSMPQSSH). The segment at 233-423 (SLQSMPQSSH…TNIASRGAAG (191 aa)) is disordered. Phosphoserine is present on residues Ser-250 and Ser-268. Polar residues predominate over residues 270-319 (AETQTTPAPLPSDSTLAQDSPLTAQEMSDSTLTSPLEASWVSSQNDSPSD). Residues 302-585 (TSPLEASWVS…DLEIQDADIR (284 aa)) are interaction with UVRAG. Over residues 339–371 (ASCESHSSNGESSSSHLFSSSSSQKLESAASSL) the composition is skewed to low complexity. A compositionally biased stretch (polar residues) spans 379–395 (QSQAGSVLRRSSFSEGQ). Phosphoserine is present on residues Ser-390, Ser-412, Ser-513, and Ser-547. The interval 490–542 (AIELMKCNMMSQCLEEEEVEEEDSDREIQELKQKIRLRRQQIRTKNLLPAYRE) is interaction with BECN1. The segment covering 547 to 566 (SFRVTSSSSQFSSRDSTQLS) has biased composition (low complexity). A disordered region spans residues 547–579 (SFRVTSSSSQFSSRDSTQLSESGSAEDADDLEI). The segment at 552–609 (SSSSQFSSRDSTQLSESGSAEDADDLEIQDADIRRSAVSNGKSSFSQNLSHCFLHSTS) is interaction with CYBA. Positions 570-579 (SAEDADDLEI) are enriched in acidic residues. Ser-655 is subject to Phosphoserine. The interaction with CARD9 stretch occupies residues 656 to 744 (PDDGQHADIY…HENAQMVVPS (89 aa)). Positions 705–956 (CAGCGIRTDP…ALEATVLETT (252 aa)) are interaction with Rab7.

As to quaternary structure, associates with PI3K (PI3KC3/PI3K-III/class III phosphatidylinositol 3-kinase) complex II (PI3KC3-C2) in which the core composed of the catalytic subunit PIK3C3, the regulatory subunit PIK3R4 and BECN1 is associated with UVRAG; in the complex interacts directly with PI3KC3 and UVRAG. Interacts with Rab7 (RAB7A or RAB7B) (GTP-bound form); Rab7 and UVRAG compete for RUBCN binding; can interact simultaneously with Rab7 and the PI3K complex. Interacts with CYBA and CYBB; indicative for the association with the CYBA:CYBB NADPH oxidase heterodimer. Interacts with NOX4 and probably associates with the CYBA:NOX4 complex. Interacts with YWHAB and CARD9 in a competitive and stimulation-dependent manner; RUBCN exchanges interaction from YWHAB to CARD9 upon stimulation with beta-1,3-glucan.

It localises to the late endosome. The protein localises to the lysosome. Its subcellular location is the early endosome. Inhibits PIK3C3 activity; under basal conditions negatively regulates PI3K complex II (PI3KC3-C2) function in autophagy. Negatively regulates endosome maturation and degradative endocytic trafficking and impairs autophagosome maturation process. Can sequester UVRAG from association with a class C Vps complex (possibly the HOPS complex) and negatively regulates Rab7 activation. Functionally, involved in regulation of pathogen-specific host defense of activated macrophages. Following bacterial infection promotes NADH oxidase activity by association with CYBA thereby affecting TLR2 signaling and probably other TLR-NOX pathways. Stabilizes the CYBA:CYBB NADPH oxidase heterodimer, increases its association with TLR2 and its phagosome trafficking to induce antimicrobial burst of ROS and production of inflammatory cytokines. Following fungal or viral infection (implicating CLEC7A (dectin-1)-mediated myeloid cell activation or RIGI-dependent sensing of RNA viruses) negatively regulates pro-inflammatory cytokine production by association with CARD9 and sequestering it from signaling complexes. This chain is Run domain Beclin-1-interacting and cysteine-rich domain-containing protein, found in Mus musculus (Mouse).